A 369-amino-acid chain; its full sequence is Flagellar P-ring protein (369 aa).

Positions 1–22 are cleaved as a signal peptide; the sequence is MFNVRQLIATTLLLSCAFAAQA.

The protein belongs to the FlgI family. The basal body constitutes a major portion of the flagellar organelle and consists of four rings (L,P,S, and M) mounted on a central rod.

The protein resides in the periplasm. The protein localises to the bacterial flagellum basal body. Functionally, assembles around the rod to form the L-ring and probably protects the motor/basal body from shearing forces during rotation. This chain is Flagellar P-ring protein, found in Pseudomonas putida (strain ATCC 47054 / DSM 6125 / CFBP 8728 / NCIMB 11950 / KT2440).